Consider the following 331-residue polypeptide: Nodulation protein D 2 (331 aa).

The region spanning 6–63 (LDLNLLVALDALMTERSLTAAARKINLSQPAMSAAVARLRSYFRDELFAMRGRKLVPT) is the HTH lysR-type domain. The H-T-H motif DNA-binding region spans 23-42 (LTAAARKINLSQPAMSAAVA).

The protein belongs to the LysR transcriptional regulatory family.

Its function is as follows. NodD regulates the expression of the nodABCFE genes which encode other nodulation proteins. NodD is also a negative regulator of its own expression. Binds flavonoids as inducers. The sequence is that of Nodulation protein D 2 (nodD2) from Bradyrhizobium elkanii.